The sequence spans 1302 residues: MWRQSTILAALLVALLCAGSAESKGNRPPRITKQPAPGELLFKVAQQNKESDNPFIIECEADGQPEPEYSWIKNGKKFDWQAYDNRMLRQPGRGTLVITIPKDEDRGHYQCFASNEFGTATSNSVYVRKAELNAFKDEAAKTLEAVEGEPFMLKCAAPDGFPSPTVNWMIQESIDGSIKSINNSRMTLDPEGNLWFSNVTREDASSDFYYACSATSVFRSEYKIGNKVLLDVKQMGVSASQNKHPPVRQYVSRRQSLALRGKRMELFCIYGGTPLPQTVWSKDGQRIQWSDRITQGHYGKSLVIRQTNFDDAGTYTCDVSNGVGNAQSFSIILNVNSVPYFTKEPEIATAAEDEEVVFECRAAGVPEPKISWIHNGKPIEQSTPNPRRTVTDNTIRIINLVKGDTGNYGCNATNSLGYVYKDVYLNVQAEPPTISEAPAAVSTVDGRNVTIKCRVNGSPKPLVKWLRASNWLTGGRYNVQANGDLEIQDVTFSDAGKYTCYAQNKFGEIQADGSLVVKEHTRITQEPQNYEVAAGQSATFRCNEAHDDTLEIEIDWWKDGQSIDFEAQPRFVKTNDNSLTIAKTMELDSGEYTCVARTRLDEATARANLIVQDVPNAPKLTGITCQADKAEIHWEQQGDNRSPILHYTIQFNTSFTPASWDAAYEKVPNTDSSFVVQMSPWANYTFRVIAFNKIGASPPSAHSDSCTTQPDVPFKNPDNVVGQGTEPNNLVISWTPMPEIEHNAPNFHYYVSWKRDIPAAAWENNNIFDWRQNNIVIADQPTFVKYLIKVVAINDRGESNVAAEEVVGYSGEDRPLDAPTNFTMRQITSSTSGYMAWTPVSEESVRGHFKGYKIQTWTENEGEEGLREIHVKGDTHNALVTQFKPDSKNYARILAYNGRFNGPPSAVIDFDTPEGVPSPVQGLDAYPLGSSAFMLHWKKPLYPNGKLTGYKIYYEEVKESYVGERREYDPHITDPRVTRMKMAGLKPNSKYRISITATTKMGEGSEHYIEKTTLKDAVNVAPATPSFSWEQLPSDNGLAKFRINWLPSTEGHPGTHFFTMHRIKGETQWIRENEEKNSDYQEVGGLDPETAYEFRVVSVDGHFNTESATQEIDTNTVEGPIMVANETVANAGWFIGMMLALAFIIILFIIICIIRRNRGGKYDVHDRELANGRRDYPEEGGFHEYSQPLDNKSAGRQSVSSANKPGVESDTDSMAEYGDGDTGQFTEDGSFIGQYVPGKLQPPVSPQPLNNSAAAHQAAPTAGGSGAAGSAAAAGASGGASSAGGAAASNGGAAAGAVATYV.

The N-terminal stretch at M1 to S23 is a signal peptide. Over K24–M1138 the chain is Extracellular. Ig-like C2-type domains are found at residues P29–N133, A134–G225, P245–S330, P339–N426, P432–T524, and T521–I610. 4 disulfide bridges follow: C59/C111, C155/C212, C268/C317, and C360/C410. N-linked (GlcNAc...) asparagine glycans are attached at residues N182 and N198. 2 N-linked (GlcNAc...) asparagine glycosylation sites follow: N411 and N448. Fibronectin type-III domains lie at V614–D711, N716–D813, A818–G915, V916–A1017, and A1021–G1119. C625 and C706 are joined by a disulfide. N-linked (GlcNAc...) asparagine glycans are attached at residues N652 and N683. N821 is a glycosylation site (N-linked (GlcNAc...) asparagine). Residue N1125 is glycosylated (N-linked (GlcNAc...) asparagine). A helical transmembrane segment spans residues L1139 to I1154. Residues R1155 to V1302 are Cytoplasmic-facing. The segment covering G1172–F1182 has biased composition (basic and acidic residues). 2 disordered regions span residues G1172 to G1223 and V1236 to G1291. The span at P1188–N1203 shows a compositional bias: polar residues. Over residues A1253–G1275 the composition is skewed to low complexity.

In terms of assembly, forms a complex with Nrx-IV/Nrx and Cont. Forms a complex composed of septate junction proteins Nrx-IV/Nrx, Tsf2/MTf, Cont and Nrg during late embryogenesis. In terms of tissue distribution, restricted to the surface of neurons and glia in the developing nervous system. As to expression, restricted to non-neuronal tissues.

The protein resides in the cell membrane. It is found in the cell junction. The protein localises to the septate junction. In terms of biological role, essential for septate junctions. Septate junctions, which are the equivalent of vertebrate tight junctions, are characterized by regular arrays of transverse structures that span the intermembrane space and form a physical barrier to diffusion. Required for formation of the hemolymph-brain barrier (the insect blood-brain barrier). Vital for embryonic development. Involved in the targeting for degradation or recycling of certain septate junction components, including kune and bou/boudin, by regulating their endocytosis. Its function is as follows. May play a role in neural and glial cell adhesion in the developing embryo. Functionally, may be a more general cell adhesion molecule involved in non-neuronal tissues and imaginal disk morphogenesis. This is Neuroglian (Nrg) from Drosophila melanogaster (Fruit fly).